Reading from the N-terminus, the 365-residue chain is MPPLPVLNRPQIHTSVTEISHAIDRTIKEELFPVAYTTEEEQYFKTNPKPAYIDELIKDAKEFIDLQYSLKRNKIVLITSGGTTVPLENNTVRFIDNFSAGTRGASSAEQFLANGYSVIFLHREFSLTPYNRSFSHSINTLFLDYIDSEGKIKPEFAENVLKNKKLYDKYMEKEEKLLLLPFTTVNQYLWSLKSIAKLLNNSGCLFYLAAAVSDFFVPYSRLPQHKIQSGDNGKMGANNDTEGTTRTTPDGKLIVNLDPVPKFLRRLVESWATQAMIVSFKLETDESMLLYKCTQALDRYNHQLVIGNLLQTRNKQVIFVSPENRKGDWVRLDEKHHSIEEMIIPEVIARHDKWVAHSKTKLATK.

A disordered region spans residues 228 to 250; it reads QSGDNGKMGANNDTEGTTRTTPD. Residues 238-248 are compositionally biased toward polar residues; sequence NNDTEGTTRTT.

The protein belongs to the PPC synthetase family. Homodimer.

Its subcellular location is the cytoplasm. It localises to the nucleus. It carries out the reaction (R)-4'-phosphopantothenate + L-cysteine + CTP = N-[(R)-4-phosphopantothenoyl]-L-cysteine + CMP + diphosphate + H(+). It participates in cofactor biosynthesis; coenzyme A biosynthesis; CoA from (R)-pantothenate: step 2/5. Catalyzes the first step in the biosynthesis of coenzyme A from vitamin B5, where cysteine is conjugated to 4'-phosphopantothenate to form 4-phosphopantothenoylcysteine. This chain is Phosphopantothenate--cysteine ligase CAB2 (CAB2), found in Saccharomyces cerevisiae (strain ATCC 204508 / S288c) (Baker's yeast).